Here is a 224-residue protein sequence, read N- to C-terminus: DNA mismatch repair protein MutH (224 aa).

This sequence belongs to the MutH family.

Its subcellular location is the cytoplasm. Its function is as follows. Sequence-specific endonuclease that cleaves unmethylated GATC sequences. It is involved in DNA mismatch repair. This Shewanella amazonensis (strain ATCC BAA-1098 / SB2B) protein is DNA mismatch repair protein MutH.